The following is a 343-amino-acid chain: N-acetyl-gamma-glutamyl-phosphate reductase (343 aa).

The active site involves Cys147.

This sequence belongs to the NAGSA dehydrogenase family. Type 1 subfamily.

It localises to the cytoplasm. It catalyses the reaction N-acetyl-L-glutamate 5-semialdehyde + phosphate + NADP(+) = N-acetyl-L-glutamyl 5-phosphate + NADPH + H(+). The protein operates within amino-acid biosynthesis; L-arginine biosynthesis; N(2)-acetyl-L-ornithine from L-glutamate: step 3/4. Catalyzes the NADPH-dependent reduction of N-acetyl-5-glutamyl phosphate to yield N-acetyl-L-glutamate 5-semialdehyde. The protein is N-acetyl-gamma-glutamyl-phosphate reductase of Listeria welshimeri serovar 6b (strain ATCC 35897 / DSM 20650 / CCUG 15529 / CIP 8149 / NCTC 11857 / SLCC 5334 / V8).